The chain runs to 502 residues: Probable cytosol aminopeptidase (502 aa).

Mn(2+) is bound by residues lysine 269 and aspartate 274. The active site involves lysine 281. Mn(2+)-binding residues include aspartate 292, aspartate 351, and glutamate 353. Arginine 355 is an active-site residue.

The protein belongs to the peptidase M17 family. The cofactor is Mn(2+).

The protein resides in the cytoplasm. The enzyme catalyses Release of an N-terminal amino acid, Xaa-|-Yaa-, in which Xaa is preferably Leu, but may be other amino acids including Pro although not Arg or Lys, and Yaa may be Pro. Amino acid amides and methyl esters are also readily hydrolyzed, but rates on arylamides are exceedingly low.. The catalysed reaction is Release of an N-terminal amino acid, preferentially leucine, but not glutamic or aspartic acids.. In terms of biological role, presumably involved in the processing and regular turnover of intracellular proteins. Catalyzes the removal of unsubstituted N-terminal amino acids from various peptides. In Shewanella frigidimarina (strain NCIMB 400), this protein is Probable cytosol aminopeptidase.